Reading from the N-terminus, the 324-residue chain is Glyoxylate/hydroxypyruvate reductase B (324 aa).

Residues Arg-237 and Glu-266 contribute to the active site. Residue His-285 is the Proton donor of the active site.

Belongs to the D-isomer specific 2-hydroxyacid dehydrogenase family. GhrB subfamily. As to quaternary structure, homodimer.

The protein localises to the cytoplasm. It catalyses the reaction glycolate + NADP(+) = glyoxylate + NADPH + H(+). The catalysed reaction is (R)-glycerate + NAD(+) = 3-hydroxypyruvate + NADH + H(+). The enzyme catalyses (R)-glycerate + NADP(+) = 3-hydroxypyruvate + NADPH + H(+). Functionally, catalyzes the NADPH-dependent reduction of glyoxylate and hydroxypyruvate into glycolate and glycerate, respectively. The polypeptide is Glyoxylate/hydroxypyruvate reductase B (Salmonella choleraesuis (strain SC-B67)).